Reading from the N-terminus, the 147-residue chain is Globin, major polymeric component P1 (147 aa).

Residues 2–146 enclose the Globin domain; sequence HLTADQVAAL…ISDACIAGLQ (145 aa). His-96 is a heme b binding site.

Belongs to the globin family. Polymer.

This chain is Globin, major polymeric component P1, found in Glycera dibranchiata (Bloodworm).